Here is a 309-residue protein sequence, read N- to C-terminus: Glutaminase (309 aa).

Substrate is bound by residues Ser65, Asn117, Glu162, Asn169, Tyr193, Tyr245, and Val263.

It belongs to the glutaminase family. As to quaternary structure, homotetramer.

It catalyses the reaction L-glutamine + H2O = L-glutamate + NH4(+). The chain is Glutaminase from Bacillus cytotoxicus (strain DSM 22905 / CIP 110041 / 391-98 / NVH 391-98).